A 141-amino-acid chain; its full sequence is Large ribosomal subunit protein uL11 (141 aa).

The protein belongs to the universal ribosomal protein uL11 family. Part of the ribosomal stalk of the 50S ribosomal subunit. Interacts with L10 and the large rRNA to form the base of the stalk. L10 forms an elongated spine to which L12 dimers bind in a sequential fashion forming a multimeric L10(L12)X complex. Post-translationally, one or more lysine residues are methylated.

Its function is as follows. Forms part of the ribosomal stalk which helps the ribosome interact with GTP-bound translation factors. This chain is Large ribosomal subunit protein uL11, found in Aliarcobacter butzleri (strain RM4018) (Arcobacter butzleri).